Consider the following 310-residue polypeptide: Tagatose-6-phosphate kinase (310 aa).

Belongs to the carbohydrate kinase PfkB family. LacC subfamily.

The catalysed reaction is D-tagatofuranose 6-phosphate + ATP = D-tagatofuranose 1,6-bisphosphate + ADP + H(+). It functions in the pathway carbohydrate metabolism; D-tagatose 6-phosphate degradation; D-glyceraldehyde 3-phosphate and glycerone phosphate from D-tagatose 6-phosphate: step 1/2. This is Tagatose-6-phosphate kinase from Streptococcus agalactiae serotype Ia (strain ATCC 27591 / A909 / CDC SS700).